Here is a 1407-residue protein sequence, read N- to C-terminus: DNA-directed RNA polymerase subunit beta' (1407 aa).

The Zn(2+) site is built by C70, C72, C85, and C88. Residues D460, D462, and D464 each contribute to the Mg(2+) site. Residues C814, C888, C895, and C898 each coordinate Zn(2+). Position 972 is an N6-acetyllysine (K972).

The protein belongs to the RNA polymerase beta' chain family. In terms of assembly, the RNAP catalytic core consists of 2 alpha, 1 beta, 1 beta' and 1 omega subunit. When a sigma factor is associated with the core the holoenzyme is formed, which can initiate transcription. Requires Mg(2+) as cofactor. It depends on Zn(2+) as a cofactor.

The enzyme catalyses RNA(n) + a ribonucleoside 5'-triphosphate = RNA(n+1) + diphosphate. DNA-dependent RNA polymerase catalyzes the transcription of DNA into RNA using the four ribonucleoside triphosphates as substrates. The polypeptide is DNA-directed RNA polymerase subunit beta' (Escherichia coli (strain SMS-3-5 / SECEC)).